The chain runs to 402 residues: Multidrug resistance protein MdtH (402 aa).

At Met1–Lys12 the chain is on the cytoplasmic side. The helical transmembrane segment at Tyr13 to Ile33 threads the bilayer. Residues Ser34–Glu98 lie on the Periplasmic side of the membrane. Residues Pro99–Phe116 traverse the membrane as a helical segment. The Cytoplasmic portion of the chain corresponds to Asp117 to Ser138. Residues Leu139–Leu159 traverse the membrane as a helical segment. Residues Gln160–Arg164 lie on the Periplasmic side of the membrane. A helical transmembrane segment spans residues Leu165–Leu185. The Cytoplasmic portion of the chain corresponds to Pro186 to Tyr213. Residues Val214–Met234 form a helical membrane-spanning segment. At Val235–Ser243 the chain is on the periplasmic side. The helical transmembrane segment at Ala244 to Ala264 threads the bilayer. Topologically, residues Arg265–Arg276 are cytoplasmic. Residues Leu277–Leu297 form a helical membrane-spanning segment. Residues Gln298–Gln299 lie on the Periplasmic side of the membrane. Residues Leu300–Thr320 form a helical membrane-spanning segment. At Leu321 to Arg339 the chain is on the cytoplasmic side. Residues Leu340–Gly360 traverse the membrane as a helical segment. Residues Lys361 to Glu367 lie on the Periplasmic side of the membrane. A helical transmembrane segment spans residues Leu368 to Phe388. Over Ser389 to Ala402 the chain is Cytoplasmic.

The protein belongs to the major facilitator superfamily. DHA1 family. MdtH (TC 2.A.1.2.21) subfamily.

Its subcellular location is the cell inner membrane. Confers resistance to norfloxacin and enoxacin. The polypeptide is Multidrug resistance protein MdtH (Escherichia coli (strain SE11)).